Consider the following 331-residue polypeptide: Ornithine lipid hydroxylase OlsE (331 aa).

Transmembrane regions (helical) follow at residues 13 to 33, 37 to 57, 85 to 105, 120 to 140, and 189 to 209; these read VSSLLWPAILCAGLTGAYFAF, MHLLWFNVVYLSTVAIIALFE, GGVQIAAAIGTSFPMAVATVA, WPMAFQVVLGLVIAEFGLYMA, and LLGAPLPVFLWIGAVTAFIGL. The Fatty acid hydroxylase domain maps to 126–260; it reads VVLGLVIAEF…LVIWDQLLGT (135 aa).

This sequence belongs to the sterol desaturase family.

It is found in the cell inner membrane. The protein operates within lipid metabolism. Functionally, involved in the biosynthesis of ornithine lipids (OLs), which are phosphorus-free membrane lipids. Is responsible for the hydroxylation of OL within the ornithine moiety. In Rhizobium tropici, this protein is Ornithine lipid hydroxylase OlsE.